We begin with the raw amino-acid sequence, 1019 residues long: Katanin p80 WD40 repeat-containing subunit B1 homolog KTN80.1 (1019 aa).

WD repeat units follow at residues 13 to 53 (AHSG…SPMS), 56 to 95 (GHTS…MVRA), 98 to 137 (GHRS…CIQT), 140 to 181 (GHTR…HEFK), 183 to 221 (HEGP…LIGT), 224 to 264 (PEAT…DGVD), and 266 to 303 (GWST…LEPY). A DWD box motif is present at residues 114–130 (FLASGSSDTNLRVWDTR). Disordered stretches follow at residues 388–424 (FGPA…TKSG), 455–474 (KSGL…LSEQ), 517–581 (IHRS…GSRE), and 607–652 (RGEK…RARS). Polar residues predominate over residues 465 to 474 (QTQNAFLSEQ). Residues 553-572 (IPSKTERVLSREKPGDEQKN) are compositionally biased toward basic and acidic residues. Over residues 614–628 (TEGASTTIEQNNNAV) the composition is skewed to polar residues.

The protein belongs to the WD repeat KATNB1 family. In terms of assembly, component of KTN80-KTN1 complexes composed of a hexamer of KTN1-KTN80 heterodimers that sense microtubule (MT) geometry to confer precise MT severing. Interacts directly with AAA1/KTN1 and KTN80.3, and weakly with KTN80.4. As to expression, expressed at low levels in siliques, flowers, leaves, stems and roots.

The protein resides in the cytoplasm. It is found in the cytoskeleton. May participate in a complex which severs microtubules in an ATP-dependent manner. Microtubule severing may promote rapid reorganization of cellular microtubule arrays. Confers precision to microtubule (MT) severing by specific targeting of KTN1 to MT cleavage sites such as crossover or branching nucleation sites. Together with other KTN80s, regulates cell elongation by modulating MT organization. This is Katanin p80 WD40 repeat-containing subunit B1 homolog KTN80.1 from Arabidopsis thaliana (Mouse-ear cress).